A 119-amino-acid chain; its full sequence is Large ribosomal subunit protein uL18 (119 aa).

The protein belongs to the universal ribosomal protein uL18 family. As to quaternary structure, part of the 50S ribosomal subunit; part of the 5S rRNA/L5/L18/L25 subcomplex. Contacts the 5S and 23S rRNAs.

Its function is as follows. This is one of the proteins that bind and probably mediate the attachment of the 5S RNA into the large ribosomal subunit, where it forms part of the central protuberance. This is Large ribosomal subunit protein uL18 from Clostridium botulinum (strain ATCC 19397 / Type A).